Here is a 1024-residue protein sequence, read N- to C-terminus: SAC3 family protein 1 (1024 aa).

Residues 1–62 (MEKRNETGNN…QDSRQKRFSS (62 aa)) form a disordered region. The span at 11–21 (RLKRSNNRGKS) shows a compositional bias: basic residues. Basic and acidic residues predominate over residues 22 to 38 (KKDWKDASVETTPRETS). Residues 39–52 (VDEDNTSVFEDVEA) are compositionally biased toward acidic residues. The region spanning 243–433 (EVEQLRKGIL…NKTAFFNDSK (191 aa)) is the PCI domain. Ser841 is subject to Phosphoserine. A coiled-coil region spans residues 945 to 1022 (AQLEELEVVR…ARDLLKKVET (78 aa)).

Belongs to the SAC3 family.

Its subcellular location is the cytoplasm. The protein localises to the nucleus envelope. The polypeptide is SAC3 family protein 1 (Schizosaccharomyces pombe (strain 972 / ATCC 24843) (Fission yeast)).